A 553-amino-acid polypeptide reads, in one-letter code: Hydroxylamine reductase (553 aa).

4 residues coordinate [2Fe-2S] cluster: Cys-3, Cys-6, Cys-18, and Cys-25. Residues His-252, Glu-276, Cys-320, Cys-408, Cys-436, Cys-461, Glu-495, and Lys-497 each contribute to the hybrid [4Fe-2O-2S] cluster site. Cys-408 is subject to Cysteine persulfide.

This sequence belongs to the HCP family. [2Fe-2S] cluster is required as a cofactor. Requires hybrid [4Fe-2O-2S] cluster as cofactor.

The protein localises to the cytoplasm. The enzyme catalyses A + NH4(+) + H2O = hydroxylamine + AH2 + H(+). In terms of biological role, catalyzes the reduction of hydroxylamine to form NH(3) and H(2)O. This Tolumonas auensis (strain DSM 9187 / NBRC 110442 / TA 4) protein is Hydroxylamine reductase.